We begin with the raw amino-acid sequence, 534 residues long: ATP synthase subunit beta 2 (534 aa).

Position 185–192 (185–192 (GGAGVGKT)) interacts with ATP. Positions 494–505 (AAAREADARREA) are enriched in basic and acidic residues. The tract at residues 494 to 534 (AAAREADARREAAAAASGAGPGTTSDPASGSAEPQGARHGR) is disordered.

This sequence belongs to the ATPase alpha/beta chains family. In terms of assembly, F-type ATPases have 2 components, CF(1) - the catalytic core - and CF(0) - the membrane proton channel. CF(1) has five subunits: alpha(3), beta(3), gamma(1), delta(1), epsilon(1). CF(0) has three main subunits: a(1), b(2) and c(9-12). The alpha and beta chains form an alternating ring which encloses part of the gamma chain. CF(1) is attached to CF(0) by a central stalk formed by the gamma and epsilon chains, while a peripheral stalk is formed by the delta and b chains.

Its subcellular location is the cell inner membrane. The catalysed reaction is ATP + H2O + 4 H(+)(in) = ADP + phosphate + 5 H(+)(out). Produces ATP from ADP in the presence of a proton gradient across the membrane. The catalytic sites are hosted primarily by the beta subunits. This Burkholderia mallei (strain NCTC 10247) protein is ATP synthase subunit beta 2.